The primary structure comprises 361 residues: S-adenosylmethionine:tRNA ribosyltransferase-isomerase (361 aa).

Belongs to the QueA family. Monomer.

The protein localises to the cytoplasm. It catalyses the reaction 7-aminomethyl-7-carbaguanosine(34) in tRNA + S-adenosyl-L-methionine = epoxyqueuosine(34) in tRNA + adenine + L-methionine + 2 H(+). It functions in the pathway tRNA modification; tRNA-queuosine biosynthesis. Its function is as follows. Transfers and isomerizes the ribose moiety from AdoMet to the 7-aminomethyl group of 7-deazaguanine (preQ1-tRNA) to give epoxyqueuosine (oQ-tRNA). This is S-adenosylmethionine:tRNA ribosyltransferase-isomerase from Methylocella silvestris (strain DSM 15510 / CIP 108128 / LMG 27833 / NCIMB 13906 / BL2).